We begin with the raw amino-acid sequence, 501 residues long: Aldehyde dehydrogenase mpl4 (501 aa).

Position 231 to 236 (231 to 236 (GSTASG)) interacts with NAD(+). Residues glutamate 253 and cysteine 287 contribute to the active site.

The protein belongs to the aldehyde dehydrogenase family.

The catalysed reaction is an aldehyde + NAD(+) + H2O = a carboxylate + NADH + 2 H(+). The protein operates within mycotoxin biosynthesis. Functionally, aldehyde dehydrogenase; part of the gene cluster that mediates the biosynthesis of the mycotoxin citrinin, a hepato-nephrotoxic compound to humans due to inhibition of respiration complex III. The pathway begins with the synthesis of a keto-aldehyde intermediate by the citrinin PKS (pksCT) from successive condensations of 4 malonyl-CoA units, presumably with a simple acetyl-CoA starter unit. Release of the keto-aldehyde intermediate is consistent with the presence of the C-terminal reductive release domain. Mp11 collaborates with pksCT by catalyzing the hydrolysis of ACP-bound acyl intermediates to free the ACP from stalled intermediates. Mpl2 then catalyzes the oxidation of the C-12 methyl of the ketone intermediate to an alcohol intermediate which is further oxidized by the oxidoreductase mpl7 to produce a bisaldehyde intermediate. The fourth catalytic step is catalyzed by the mpl4 aldehyde dehydrogenase. The final transformation is the reduction of C-3 by mpl6 to provide the chemically stable citrinin nucleus. This Monascus purpureus (Red mold) protein is Aldehyde dehydrogenase mpl4.